The primary structure comprises 414 residues: Ornithine aminotransferase (414 aa).

Cysteines 154 and 163 form a disulfide. The residue at position 262 (Lys-262) is an N6-(pyridoxal phosphate)lysine.

Belongs to the class-III pyridoxal-phosphate-dependent aminotransferase family. In terms of assembly, homodimer. It depends on pyridoxal 5'-phosphate as a cofactor. In terms of processing, the disulfide bond between Cys-154 and Cys-163 is reduced by TRX1 which increases OAT catalytic activity.

It is found in the cytoplasm. It carries out the reaction a 2-oxocarboxylate + L-ornithine = L-glutamate 5-semialdehyde + an L-alpha-amino acid. The enzyme catalyses L-ornithine + 2-oxoglutarate = L-glutamate 5-semialdehyde + L-glutamate. Its pathway is amino-acid biosynthesis; L-proline biosynthesis; L-glutamate 5-semialdehyde from L-ornithine: step 1/1. With respect to regulation, unlike for mammalian OATs, activity is increased by TRX1-mediated reduction of the disulfide bond between Cys-154 and Cys-163. Binding to TRX1 may also induce conformational changes that facilitate substrate binding. The enzyme has a very narrow substrate specificity and can only catalyze the transamination of alpha-ketoglutarate with ornithine or N-acetylornithine and, to a lesser extent, of glutamate-5-semialdehyde with glutamate and alanine. This chain is Ornithine aminotransferase, found in Plasmodium falciparum (isolate 3D7).